The chain runs to 134 residues: Holo-[acyl-carrier-protein] synthase (134 aa).

Residues Asp8 and Glu57 each contribute to the Mg(2+) site.

This sequence belongs to the P-Pant transferase superfamily. AcpS family. It depends on Mg(2+) as a cofactor.

It is found in the cytoplasm. It catalyses the reaction apo-[ACP] + CoA = holo-[ACP] + adenosine 3',5'-bisphosphate + H(+). Transfers the 4'-phosphopantetheine moiety from coenzyme A to a Ser of acyl-carrier-protein. The chain is Holo-[acyl-carrier-protein] synthase from Rhizobium etli (strain CIAT 652).